Consider the following 207-residue polypeptide: Ion-translocating oxidoreductase complex subunit G (207 aa).

A helical membrane pass occupies residues 11–31; it reads GILLGFIALLCTIISTGIFFL. Thr-175 bears the FMN phosphoryl threonine mark.

This sequence belongs to the RnfG family. As to quaternary structure, the complex is composed of six subunits: RnfA, RnfB, RnfC, RnfD, RnfE and RnfG. FMN is required as a cofactor.

The protein resides in the cell inner membrane. Functionally, part of a membrane-bound complex that couples electron transfer with translocation of ions across the membrane. This is Ion-translocating oxidoreductase complex subunit G from Haemophilus influenzae (strain 86-028NP).